Here is a 598-residue protein sequence, read N- to C-terminus: Elongation factor 4 (598 aa).

In terms of domain architecture, tr-type G spans 4 to 186 (SRLRNFSIIA…EIVKKIPPPK (183 aa)). GTP is bound by residues 16-21 (DHGKST) and 133-136 (NKID).

Belongs to the TRAFAC class translation factor GTPase superfamily. Classic translation factor GTPase family. LepA subfamily.

It localises to the cell inner membrane. It carries out the reaction GTP + H2O = GDP + phosphate + H(+). Functionally, required for accurate and efficient protein synthesis under certain stress conditions. May act as a fidelity factor of the translation reaction, by catalyzing a one-codon backward translocation of tRNAs on improperly translocated ribosomes. Back-translocation proceeds from a post-translocation (POST) complex to a pre-translocation (PRE) complex, thus giving elongation factor G a second chance to translocate the tRNAs correctly. Binds to ribosomes in a GTP-dependent manner. This is Elongation factor 4 from Pelobacter propionicus (strain DSM 2379 / NBRC 103807 / OttBd1).